We begin with the raw amino-acid sequence, 693 residues long: Elongation factor G (693 aa).

Residues 8-284 enclose the tr-type G domain; sequence HMVRNIGIAA…AVIDYLPAPD (277 aa). Residues 17-24, 81-85, and 135-138 contribute to the GTP site; these read AHIDAGKT, DTPGH, and NKMD.

This sequence belongs to the TRAFAC class translation factor GTPase superfamily. Classic translation factor GTPase family. EF-G/EF-2 subfamily.

The protein localises to the cytoplasm. Catalyzes the GTP-dependent ribosomal translocation step during translation elongation. During this step, the ribosome changes from the pre-translocational (PRE) to the post-translocational (POST) state as the newly formed A-site-bound peptidyl-tRNA and P-site-bound deacylated tRNA move to the P and E sites, respectively. Catalyzes the coordinated movement of the two tRNA molecules, the mRNA and conformational changes in the ribosome. This Nautilia profundicola (strain ATCC BAA-1463 / DSM 18972 / AmH) protein is Elongation factor G.